We begin with the raw amino-acid sequence, 229 residues long: MTSKSLNAWVIHKQWSGDTSARLKLFTRELGLINCLCKGGRTPKKQSLLQAFIPLWVSIEERYDQYYTRNIESTSSRLDLEGHSLFSGLYINELLYYTLSPDFPDPDLFDAYLFTLNGIALAREREAIEALLRRFEWALLKACGYTFSFLHEARTGELIVPDSYYQFVAGEGFILGGDKEIPGEHLLAIAADNLSESAYLKSAKFIMRQAINHLLGGREIKARSLYGPA.

It belongs to the RecO family.

Its function is as follows. Involved in DNA repair and RecF pathway recombination. The protein is DNA repair protein RecO of Legionella pneumophila subsp. pneumophila (strain Philadelphia 1 / ATCC 33152 / DSM 7513).